Here is a 389-residue protein sequence, read N- to C-terminus: Odorant receptor 85c (389 aa).

Over 1–33 (MKFMKYAVFFYTSVGIEPYTIDSRSKKASLWSH) the chain is Cytoplasmic. The helical transmembrane segment at 34–54 (LLFWANVINLSVIVFGEILYL) threads the bilayer. The Extracellular portion of the chain corresponds to 55–66 (GVAYSDGKFIDA). The chain crosses the membrane as a helical span at residues 67–87 (VTVLSYIGFVIVGMSKMFFIW). Residues 88 to 130 (WKKTDLSDLVKELEHIYPNGKAEEEMYRLDRYLRSCSRISITY) lie on the Cytoplasmic side of the membrane. Residues 131–151 (ALLYSVLIWTFNLFSIMQFLV) traverse the membrane as a helical segment. Topologically, residues 152–199 (YEKLLKIRVVGQTLPYLMYFPWNWHENWTYYVLLFCQNFAGHTSASGQ) are extracellular. A glycan (N-linked (GlcNAc...) asparagine) is linked at asparagine 178. The chain crosses the membrane as a helical span at residues 200–220 (ISTDLLLCAVATQVVMHFDYL). Over 221–259 (ARVVEKQVLDRDWSENSRFLAKTVQYHQRILRLMDVLND) the chain is Cytoplasmic. Residues 260–280 (IFGIPLLLNFMVSTFVICFVG) traverse the membrane as a helical segment. The Extracellular portion of the chain corresponds to 281-290 (FQMTVGVPPD). Residues 291–311 (IMIKLFLFLFSSLSQVYLICH) form a helical membrane-spanning segment. At 312–359 (YGQLIADASSSLSISAYKQNWQNADIRYRRALVFFIARPQRTTYLKAT) the chain is on the cytoplasmic side. A helical transmembrane segment spans residues 360-380 (IFMNITRATMTDLLQVSYKFF). Over 381-389 (ALLRTMYIK) the chain is Extracellular.

The protein belongs to the insect chemoreceptor superfamily. Heteromeric odorant receptor channel (TC 1.A.69) family. Or49a subfamily. In terms of assembly, interacts with Orco. Complexes exist early in the endomembrane system in olfactory sensory neurons (OSNs), coupling these complexes to the conserved ciliary trafficking pathway.

Its subcellular location is the cell membrane. Odorant receptor which mediates acceptance or avoidance behavior, depending on its substrates. The odorant receptor repertoire encodes a large collection of odor stimuli that vary widely in identity, intensity, and duration. May form a complex with Orco to form odorant-sensing units, providing sensitive and prolonged odorant signaling and calcium permeability. This Drosophila melanogaster (Fruit fly) protein is Odorant receptor 85c (Or85c).